We begin with the raw amino-acid sequence, 226 residues long: 6-carboxyhexanoate--CoA ligase (226 aa).

The protein belongs to the BioW family. Homodimer. Mg(2+) serves as cofactor.

The catalysed reaction is heptanedioate + ATP + CoA = 6-carboxyhexanoyl-CoA + AMP + diphosphate. The protein operates within metabolic intermediate metabolism; pimeloyl-CoA biosynthesis; pimeloyl-CoA from pimelate: step 1/1. Its function is as follows. Catalyzes the transformation of pimelate into pimeloyl-CoA with concomitant hydrolysis of ATP to AMP. This is 6-carboxyhexanoate--CoA ligase from Methanocaldococcus infernus (strain DSM 11812 / JCM 15783 / ME).